The sequence spans 341 residues: Thromboxane A2 receptor (341 aa).

Residues 1-29 (MWPNGTSLGACFRPVNITLQERRAIASPW) lie on the Extracellular side of the membrane. 2 N-linked (GlcNAc...) asparagine glycosylation sites follow: Asn-4 and Asn-16. Residues 30–52 (FAASFCALGLGSNLLALSVLAGA) traverse the membrane as a helical segment. Over 53 to 65 (RPGAGPRSSFLAL) the chain is Cytoplasmic. The chain crosses the membrane as a helical span at residues 66 to 86 (LCGLVLTDFLGLLVTGAIVAS). At 87 to 105 (QHAALLDWRATDPSCRLCY) the chain is on the extracellular side. Cysteines 104 and 181 form a disulfide. A helical membrane pass occupies residues 106-127 (FMGVAMVFFGLCPLLLGAAMAS). The Cytoplasmic segment spans residues 128–147 (ERFVGITRPFSRPTATSRRA). A helical transmembrane segment spans residues 148–170 (WATVGLVWVAAGALGLLPLLGLG). The Extracellular segment spans residues 171–191 (RYSVQYPGSWCFLTLGTQRGD). The helical transmembrane segment at 192–217 (VVFGLIFALLGSASVGLSLLLNTVSV) threads the bilayer. Over 218–244 (ATLCRVYHTREATQRPRDCEVEMMVQL) the chain is Cytoplasmic. The chain crosses the membrane as a helical span at residues 245 to 268 (VGIMVVATVCWMPLLVFIMQTLLQ). Topologically, residues 269-287 (TPPVMSFSGQLLRATEHQL) are extracellular. A helical membrane pass occupies residues 288 to 309 (LIYLRVATWNQILDPWVYILFR). Over 310 to 341 (RSVLRRLHPRFSSQLQAVSLRRPPAQAMLSGP) the chain is Cytoplasmic. Ser-328 is modified (phosphoserine).

Belongs to the G-protein coupled receptor 1 family. In terms of assembly, interacts with RPGRIP1L. Interacts with RACK1; the interaction regulates TBXA2R cell surface expression.

The protein localises to the cell membrane. Functionally, receptor for thromboxane A2 (TXA2), a potent stimulator of platelet aggregation. The activity of this receptor is mediated by a G-protein that activates a phosphatidylinositol-calcium second messenger system. In the kidney, the binding of TXA2 to glomerular TP receptors causes intense vasoconstriction. Activates phospholipase C and adenylyl cyclase. This Mus musculus (Mouse) protein is Thromboxane A2 receptor (Tbxa2r).